The following is a 473-amino-acid chain: Microtubule-binding protein TANGLED (473 aa).

Residues 1 to 132 are required for binding to TAN and location to the cortical division sites (CDS) during cytokinesis; sequence MVARTPQKQR…VTRDIVDAIA (132 aa). Disordered regions lie at residues 131 to 218 and 290 to 354; these read IAPK…ENSF and ASKF…LSTA. Composition is skewed to polar residues over residues 205 to 216 and 307 to 329; these read ISPQVKGNNGEN and PTRN…TRTV.

Interacts with POK1. In terms of tissue distribution, strongly expressed in flower buds and root tips.

The protein resides in the nucleus. The protein localises to the nucleolus. It localises to the cytoplasm. It is found in the cytoskeleton. Its subcellular location is the phragmoplast. In terms of biological role, is required for spatial control cell division during plant development. Through an association with microtubules, acts both for the positioning of cytoskeletal arrays that establish planes of cell division during prophase and for spatial guidance of expanding phragmoplasts toward preestablished cortical division sites (CDS) during cytokinesis. The protein is Microtubule-binding protein TANGLED (TAN) of Arabidopsis thaliana (Mouse-ear cress).